Reading from the N-terminus, the 263-residue chain is Type III pantothenate kinase (263 aa).

6-13 (DVGNTNIK) contributes to the ATP binding site. 108–111 (GSDR) provides a ligand contact to substrate. Asp110 acts as the Proton acceptor in catalysis. Asp131 is a binding site for K(+). Thr134 is a binding site for ATP. A substrate-binding site is contributed by Thr187.

The protein belongs to the type III pantothenate kinase family. In terms of assembly, homodimer. NH4(+) serves as cofactor. Requires K(+) as cofactor.

Its subcellular location is the cytoplasm. It carries out the reaction (R)-pantothenate + ATP = (R)-4'-phosphopantothenate + ADP + H(+). The protein operates within cofactor biosynthesis; coenzyme A biosynthesis; CoA from (R)-pantothenate: step 1/5. Its function is as follows. Catalyzes the phosphorylation of pantothenate (Pan), the first step in CoA biosynthesis. The protein is Type III pantothenate kinase of Anaplasma phagocytophilum (strain HZ).